We begin with the raw amino-acid sequence, 162 residues long: uncharacterized protein (162 aa).

An N-terminal signal peptide occupies residues 1–21; sequence MEGIMKKFFALMTLIAGISFS. A coiled-coil region spans residues 32–118; that stretch reads VIRESKFIAK…KKAELEKMVF (87 aa).

This sequence belongs to the Skp family.

This is an uncharacterized protein from Aquifex aeolicus (strain VF5).